The sequence spans 185 residues: Ribosome-recycling factor (185 aa).

It belongs to the RRF family.

Its subcellular location is the cytoplasm. Functionally, responsible for the release of ribosomes from messenger RNA at the termination of protein biosynthesis. May increase the efficiency of translation by recycling ribosomes from one round of translation to another. The protein is Ribosome-recycling factor of Nitrosomonas eutropha (strain DSM 101675 / C91 / Nm57).